Consider the following 297-residue polypeptide: Guanylate kinase (297 aa).

Residues 4–183 (GKMIIISGPS…AVAKITDVLH (180 aa)) form the Guanylate kinase-like domain. 11-18 (GPSGVGKG) provides a ligand contact to ATP. A unknown region spans residues 204 to 297 (EQIVKEKYMY…EQKHYNNDEF (94 aa)).

Belongs to the guanylate kinase family.

Its subcellular location is the cytoplasm. It carries out the reaction GMP + ATP = GDP + ADP. In terms of biological role, essential for recycling GMP and indirectly, cGMP. The protein is Guanylate kinase (gmk) of Mycoplasma mycoides subsp. mycoides SC (strain CCUG 32753 / NCTC 10114 / PG1).